The sequence spans 457 residues: Phosphatidate cytidylyltransferase (457 aa).

The next 6 helical transmembrane spans lie at 71–91 (VMIS…IVLI), 154–174 (FIVT…FVLF), 188–208 (GSLC…HLII), 214–234 (GLFW…FAYL), 255–275 (GFLG…RILS), and 330–350 (FHAL…GFFA).

This sequence belongs to the CDS family. Homodimer. Mg(2+) serves as cofactor.

It localises to the endoplasmic reticulum membrane. The protein localises to the cytoplasmic vesicle. It is found in the secretory vesicle. It carries out the reaction a 1,2-diacyl-sn-glycero-3-phosphate + CTP + H(+) = a CDP-1,2-diacyl-sn-glycerol + diphosphate. It participates in phospholipid metabolism; CDP-diacylglycerol biosynthesis; CDP-diacylglycerol from sn-glycerol 3-phosphate: step 3/3. Functionally, supplies CDP-diacylglycerol, which may play an important role as both a precursor to phosphoinositide biosynthesis in the plasma membrane and as a negative effector of phosphatidylinositol 4-kinase activity, thereby exerting an effect on cell proliferation via a lipid-dependent signal transduction cascade. This is Phosphatidate cytidylyltransferase (CDS1) from Saccharomyces cerevisiae (strain ATCC 204508 / S288c) (Baker's yeast).